A 509-amino-acid polypeptide reads, in one-letter code: Legumin A (509 aa).

The first 21 residues, 1–21 (MAINPSLLFLSLLFLFNGCLA), serve as a signal peptide directing secretion. 2 disulfide bridges follow: Cys34–Cys67 and Cys110–Cys331. The region spanning 39 to 273 (LRASAPQTRI…AFNVDHDIIR (235 aa)) is the Cupin type-1 1 domain. Disordered stretches follow at residues 187-248 (AGNP…ESSS) and 298-325 (PRMEEEEREERQQEQRYRHTRGGSQDNG). Acidic residues predominate over residues 212–228 (EESEEEEGEGEEEEEED). Positions 299–314 (RMEEEEREERQQEQRY) are enriched in basic and acidic residues. The region spanning 337–486 (ENLADPERAD…SYQVSREDAR (150 aa)) is the Cupin type-1 2 domain.

This sequence belongs to the 11S seed storage protein (globulins) family. As to quaternary structure, hexamer; each subunit is composed of an acidic and a basic chain derived from a single precursor and linked by a disulfide bond.

Its function is as follows. This is a seed storage protein. The chain is Legumin A (LEGA) from Gossypium hirsutum (Upland cotton).